The primary structure comprises 378 residues: tRNA-specific 2-thiouridylase MnmA (378 aa).

ATP is bound by residues 9 to 16 (GVSGGVDS) and Met-35. Residues 94-96 (NPD) are interaction with target base in tRNA. Cys-99 acts as the Nucleophile in catalysis. Cys-99 and Cys-195 are oxidised to a cystine. Gly-123 is a binding site for ATP. An interaction with tRNA region spans residues 145 to 147 (KDQ). Cys-195 (cysteine persulfide intermediate) is an active-site residue. Residues 307 to 308 (RY) form an interaction with tRNA region.

The protein belongs to the MnmA/TRMU family.

It localises to the cytoplasm. The catalysed reaction is S-sulfanyl-L-cysteinyl-[protein] + uridine(34) in tRNA + AH2 + ATP = 2-thiouridine(34) in tRNA + L-cysteinyl-[protein] + A + AMP + diphosphate + H(+). Its function is as follows. Catalyzes the 2-thiolation of uridine at the wobble position (U34) of tRNA, leading to the formation of s(2)U34. This chain is tRNA-specific 2-thiouridylase MnmA, found in Xanthomonas oryzae pv. oryzae (strain PXO99A).